The sequence spans 510 residues: NAD(P)H-quinone oxidoreductase subunit 2, chloroplastic (510 aa).

A run of 11 helical transmembrane segments spans residues 24-44 (LLLF…GLIL), 59-79 (WFYF…LFRW), 99-119 (IFQF…VEYI), 124-144 (MAIT…MFLC), 149-169 (LITI…LSGY), 183-203 (YLLM…WLYG), 295-315 (WHLL…LIAI), 323-343 (MLAY…IVGD), 347-367 (GYAS…GTFA), 395-415 (ALSS…AGFF), and 418-438 (LHLF…IGLL).

It belongs to the complex I subunit 2 family. In terms of assembly, NDH is composed of at least 16 different subunits, 5 of which are encoded in the nucleus.

The protein resides in the plastid. It is found in the chloroplast thylakoid membrane. It catalyses the reaction a plastoquinone + NADH + (n+1) H(+)(in) = a plastoquinol + NAD(+) + n H(+)(out). It carries out the reaction a plastoquinone + NADPH + (n+1) H(+)(in) = a plastoquinol + NADP(+) + n H(+)(out). NDH shuttles electrons from NAD(P)H:plastoquinone, via FMN and iron-sulfur (Fe-S) centers, to quinones in the photosynthetic chain and possibly in a chloroplast respiratory chain. The immediate electron acceptor for the enzyme in this species is believed to be plastoquinone. Couples the redox reaction to proton translocation, and thus conserves the redox energy in a proton gradient. This is NAD(P)H-quinone oxidoreductase subunit 2, chloroplastic from Maianthemum racemosum (False Solomon's-seal).